Reading from the N-terminus, the 545-residue chain is Thermosome subunit beta (545 aa).

This sequence belongs to the TCP-1 chaperonin family. As to quaternary structure, forms a Heterooligomeric complex of two stacked eight-membered rings.

In terms of biological role, molecular chaperone; binds unfolded polypeptides in vitro, and has a weak ATPase activity. The chain is Thermosome subunit beta (thsB) from Thermococcus sp. (strain KS-8).